The following is a 619-amino-acid chain: Tyrosine-protein kinase ZAP-70 (619 aa).

Residues 10-102 (FFYGSISRAE…GLPCNLRKPC (93 aa)) form the SH2 1 domain. The interdomain A stretch occupies residues 103 to 162 (NRPSGLEPQPGVFDCLRDAMVRDYVRQTWKLEGEALEQAIISQAPQVEKLIATTAHERMP). Positions 163–254 (WYHSSLTREE…GLIYCLKEAC (92 aa)) constitute an SH2 2 domain. At Y248 the chain carries Phosphotyrosine. Residues 255–337 (PNSSASNASG…KKLFLKRDNL (83 aa)) are interdomain B. The segment at 260–309 (SNASGAAAPTLPAHPSTLTHPQRRIDTLNSDGYTPEPARITSPDKPRPMP) is disordered. Residue S289 is modified to Phosphoserine. Y292 bears the Phosphotyrosine mark. The residue at position 315 (Y315) is a Phosphotyrosine; by LCK. Y319 carries the phosphotyrosine modification. The 263-residue stretch at 338–600 (LIADIELGCG…QRMRACYYSL (263 aa)) folds into the Protein kinase domain. Residues 345–352 (GCGNFGSV) and K369 contribute to the ATP site. The active-site Proton acceptor is D461. Residues Y492 and Y493 each carry the phosphotyrosine modification. K544 participates in a covalent cross-link: Glycyl lysine isopeptide (Lys-Gly) (interchain with G-Cter in ubiquitin). K603 carries the post-translational modification N6-acetyllysine.

It belongs to the protein kinase superfamily. Tyr protein kinase family. SYK/ZAP-70 subfamily. As to quaternary structure, interacts with CD247/CD3Z; this interaction docks ZAP70 at the stimulated TCR. Interacts with NFAM1. Interacts with adapter protein SLA; this interaction negatively regulates T-cell receptor signaling. Interacts with FCRL3. Interacts with VAV1. Interacts with CBL; this interaction promotes ubiquitination, internalization and subsequent degradation of CD247/CD3Z. Identified in a complex with CBL and UBE2L3. Interacts with SHB. Interacts with adapter protein SLA2; this interaction negatively regulates T-cell receptor signaling. Interacts with CBLB. Interacts (via SH2 domains) with RHOH; this interaction regulates ZAP70 subcellular localization. Interacts with DEF6. Interacts (ubiquitinated form) with OTUD7B and UBASH3B. In terms of processing, phosphorylated on tyrosine residues upon T-cell antigen receptor (TCR) stimulation. Phosphorylation of Tyr-315 and Tyr-319 are essential for ZAP70 positive function on T-lymphocyte activation whereas Tyr-292 has a negative regulatory role. Within the C-terminal kinase domain, Tyr-492 and Tyr-493 are phosphorylated after TCR induction, Tyr-492 playing a negative regulatory role and Tyr-493 a positive. Tyr-493 is dephosphorylated by PTN22. Ubiquitinated in response to T cell activation. Deubiquitinated by OTUD7B. Expressed in T- and natural killer cells. Also present in early thymocytes and pro/pre B-cells.

The protein localises to the cytoplasm. It localises to the cell membrane. It carries out the reaction L-tyrosyl-[protein] + ATP = O-phospho-L-tyrosyl-[protein] + ADP + H(+). With respect to regulation, activated by phosphorylation at Tyr-493 in the activation loop. Inhibited by staurosporine. Tyrosine kinase that plays an essential role in regulation of the adaptive immune response. Regulates motility, adhesion and cytokine expression of mature T-cells, as well as thymocyte development. Also contributes to the development and activation of primary B-lymphocytes. When antigen presenting cells (APC) activate T-cell receptor (TCR), a serie of phosphorylations lead to the recruitment of ZAP70 to the doubly phosphorylated TCR component CD247/CD3Z through ITAM motif at the plasma membrane. This recruitment serves to localization to the stimulated TCR and to relieve its autoinhibited conformation. Release of ZAP70 active conformation is further stabilized by phosphorylation mediated by LCK. Subsequently, ZAP70 phosphorylates at least 2 essential adapter proteins: LAT and LCP2. In turn, a large number of signaling molecules are recruited and ultimately lead to lymphokine production, T-cell proliferation and differentiation. Furthermore, ZAP70 controls cytoskeleton modifications, adhesion and mobility of T-lymphocytes, thus ensuring correct delivery of effectors to the APC. ZAP70 is also required for TCR-CD247/CD3Z internalization and degradation through interaction with the E3 ubiquitin-protein ligase CBL and adapter proteins SLA and SLA2. Thus, ZAP70 regulates both T-cell activation switch on and switch off by modulating TCR expression at the T-cell surface. During thymocyte development, ZAP70 promotes survival and cell-cycle progression of developing thymocytes before positive selection (when cells are still CD4/CD8 double negative). Additionally, ZAP70-dependent signaling pathway may also contribute to primary B-cells formation and activation through B-cell receptor (BCR). This chain is Tyrosine-protein kinase ZAP-70 (ZAP70), found in Homo sapiens (Human).